Consider the following 638-residue polypeptide: XK-related protein 6 (638 aa).

Disordered regions lie at residues 24-43 and 82-117; these read VGSGEEDGEPGGGGCGGGDG and RSAAAADGGDQPLQPPGAAGRHPPTPSAGRPQPASP. The segment covering 33–43 has biased composition (gly residues); the sequence is PGGGGCGGGDG. The next 7 helical transmembrane spans lie at 127-147, 158-178, 315-335, 369-389, 410-430, 439-459, and 470-490; these read LWIVLALLVFFGDVGTDLWLA, CFGLTLFFVLVPSLLVQSLSF, TLPCVSSVTSLMSLAWVLASY, VISFALFASIFQLYFGIFVVV, WEEILFNMVVGIVYIFCWFNV, MFAYYTIVLTENAALTFLWYF, and AVPALCCVFVSFVAGITLMLL.

This sequence belongs to the XK family.

Its subcellular location is the cell membrane. This is XK-related protein 6 from Mus musculus (Mouse).